The sequence spans 165 residues: AP-3 complex subunit sigma (165 aa).

Belongs to the adaptor complexes small subunit family. As to quaternary structure, adaptor protein complex 3 (AP-3) is a heterotetramer composed of 2 large adaptins (apl5 and apl6), a medium adaptin (apm3) and a small adaptin (aps3).

The protein resides in the golgi apparatus. The protein localises to the cytoplasmic vesicle membrane. Functionally, part of the AP-3 complex, an adaptor-related complex which is not clathrin-associated. The complex is associated with the Golgi region as well as more peripheral structures. It facilitates the budding of vesicles from the Golgi membrane and may be directly involved in trafficking to the vacuole. This is AP-3 complex subunit sigma (aps3) from Schizosaccharomyces pombe (strain 972 / ATCC 24843) (Fission yeast).